A 341-amino-acid chain; its full sequence is Anthranilate phosphoribosyltransferase (341 aa).

5-phospho-alpha-D-ribose 1-diphosphate-binding positions include Gly-80, 83-84 (GD), Thr-88, 90-93 (NIST), 108-116 (KHGNRSVSS), and Ser-120. Anthranilate is bound at residue Gly-80. Mg(2+) is bound at residue Ser-92. Anthranilate is bound at residue Asn-111. Anthranilate is bound at residue Arg-166. Positions 225 and 226 each coordinate Mg(2+).

The protein belongs to the anthranilate phosphoribosyltransferase family. As to quaternary structure, homodimer. Requires Mg(2+) as cofactor.

The catalysed reaction is N-(5-phospho-beta-D-ribosyl)anthranilate + diphosphate = 5-phospho-alpha-D-ribose 1-diphosphate + anthranilate. It functions in the pathway amino-acid biosynthesis; L-tryptophan biosynthesis; L-tryptophan from chorismate: step 2/5. Functionally, catalyzes the transfer of the phosphoribosyl group of 5-phosphorylribose-1-pyrophosphate (PRPP) to anthranilate to yield N-(5'-phosphoribosyl)-anthranilate (PRA). This is Anthranilate phosphoribosyltransferase from Shouchella clausii (strain KSM-K16) (Alkalihalobacillus clausii).